The chain runs to 631 residues: Phosphomethylpyrimidine synthase (631 aa).

Substrate is bound by residues Asn-239, Met-268, Tyr-297, His-333, 353–355 (SRG), 394–397 (DGLR), and Glu-433. Residue His-437 coordinates Zn(2+). Tyr-460 lines the substrate pocket. His-501 contacts Zn(2+). Cys-581, Cys-584, and Cys-589 together coordinate [4Fe-4S] cluster.

The protein belongs to the ThiC family. In terms of assembly, homodimer. Requires [4Fe-4S] cluster as cofactor.

The enzyme catalyses 5-amino-1-(5-phospho-beta-D-ribosyl)imidazole + S-adenosyl-L-methionine = 4-amino-2-methyl-5-(phosphooxymethyl)pyrimidine + CO + 5'-deoxyadenosine + formate + L-methionine + 3 H(+). It functions in the pathway cofactor biosynthesis; thiamine diphosphate biosynthesis. Its function is as follows. Catalyzes the synthesis of the hydroxymethylpyrimidine phosphate (HMP-P) moiety of thiamine from aminoimidazole ribotide (AIR) in a radical S-adenosyl-L-methionine (SAM)-dependent reaction. The sequence is that of Phosphomethylpyrimidine synthase from Salmonella dublin (strain CT_02021853).